Here is a 395-residue protein sequence, read N- to C-terminus: Enoyl-[acyl-carrier-protein] reductase [NADH] (395 aa).

NAD(+) contacts are provided by residues 48–53 (GASTGY), 74–75 (FE), 111–112 (DA), and 139–140 (LA). Tyrosine 225 contributes to the substrate binding site. Catalysis depends on tyrosine 235, which acts as the Proton donor. NAD(+) is bound by residues lysine 244 and 273-275 (LVT).

Belongs to the TER reductase family. In terms of assembly, monomer.

The catalysed reaction is a 2,3-saturated acyl-[ACP] + NAD(+) = a (2E)-enoyl-[ACP] + NADH + H(+). The protein operates within lipid metabolism; fatty acid biosynthesis. Functionally, involved in the final reduction of the elongation cycle of fatty acid synthesis (FAS II). Catalyzes the reduction of a carbon-carbon double bond in an enoyl moiety that is covalently linked to an acyl carrier protein (ACP). This chain is Enoyl-[acyl-carrier-protein] reductase [NADH], found in Saccharophagus degradans (strain 2-40 / ATCC 43961 / DSM 17024).